Here is a 298-residue protein sequence, read N- to C-terminus: Probable oxidoreductase (298 aa).

An NAD(+)-binding site is contributed by 9 to 33 (VVTGGASGLGAETVRALAAAGAEVT). Substrate is bound at residue serine 139. Tyrosine 165 serves as the catalytic Proton acceptor.

This sequence belongs to the short-chain dehydrogenases/reductases (SDR) family.

The polypeptide is Probable oxidoreductase (Streptomyces antibioticus).